The following is a 440-amino-acid chain: Tetratricopeptide repeat protein 5 (440 aa).

5 TPR repeats span residues 7 to 61 (EEVK…EEVV), 68 to 98 (AQVL…AVKL), 103 to 130 (VEAW…SGAL), 136 to 174 (KVSL…AVQM), and 179 to 216 (GRSW…AEKV). Residues 13–24 (LQKLQELVDQLY) carry the Nuclear export signal motif. Ser203 is modified (phosphoserine; by ATM). Phosphoserine; by CHEK2 is present on Ser221. One copy of the TPR 6 repeat lies at 224–253 (PDLHLNRATLHKYEENYGEALEGFSRAAAL). The tract at residues 285–287 (KTK) is mediates interaction with 28S rRNA of ribosome-coding tubulin.

As to quaternary structure, interacts with JMY and p300/EP300; the interaction occurs in the nucleus and augments the association between JMY and p300/EP300 in response to DNA damage. Interacts with PRMT5; the interaction is DNA damage-dependent and promotes PRMT5 interaction with p53/TP53 and subsequent methylation. Forms a complex with HSF1 and p300/EP300; these interactions augment chromatin-bound HSF1 and p300/EP300 histone acetyltransferase activity, resulting in enhanced heat-shock-responsive transcription. Interacts with JMY; the interaction occurs in the cytoplasm and results in the inhibition of JYM's nucleation activity. Interacts with ribosome-coding tubulin (via 60S subunit 28S rRNA and protein uL24/RPL26) and the N-terminal of nascent tubulin polypeptide (via alpha-tubulin MREC motif and beta-tubulin MREI motif); these interactions result in tubulin mRNA-targeted degradation. Interacts with ATP5F1B; the interaction occurs in the mitochondria and results in ATP production decrease. Interacts with p53/TP53; the interaction occurs in the mitochondria and results in increased apoptosis. Post-translationally, phosphorylation by ATM kinase induces nuclear accumulation while interfering with nuclear export, and phosphorylation by CHEK2 kinase enhances nuclear stability.

Its subcellular location is the nucleus. The protein localises to the cytoplasm. It is found in the cytoplasmic vesicle. The protein resides in the mitochondrion matrix. Functionally, cofactor involved in the regulation of various cellular mechanisms such as actin regulation, autophagy, chromatin regulation and DNA repair. In physiological conditions, interacts with cofactor JMY in the cytoplasm which prevents JMY's actin nucleation activity and ability to activate the Arp2/3 complex. Acts as a negative regulator of nutrient stress-induced autophagy by inhibiting JMY's interaction with MAP1LC3B, thereby preventing autophagosome formation. Involves in tubulin autoregulation by promoting its degradation in response to excess soluble tubulin. To do so, associates with the active ribosome near the ribosome exit tunnel and with nascent tubulin polypeptides early during their translation, triggering tubulin mRNA-targeted degradation. Following DNA damage, phosphorylated by DNA damage responsive protein kinases ATM and CHEK2, leading to its nuclear accumulation and stability. Nuclear TTC5/STRAP promotes the assembly of a stress-responsive p53/TP53 coactivator complex, which includes the coactivators JMY and p300, thereby increasing p53/TP53-dependent transcription and apoptosis. Also recruits arginine methyltransferase PRMT5 to p53/TP53 when DNA is damaged, allowing PRMT5 to methylate p53/TP53. In DNA stress conditions, also prevents p53/TP53 degradation by E3 ubiquitin ligase MDM2. Upon heat-shock stress, forms a chromatin-associated complex with heat-shock factor 1 HSF1 and p300/EP300 to stimulate heat-shock-responsive transcription, thereby increasing cell survival. Mitochondrial TTC5/STRAP interacts with ATP synthase subunit beta ATP5F1B which decreased ATP synthase activity and lowers mitochondrial ATP production, thereby regulating cellular respiration and mitochondrial-dependent apoptosis. Mitochondrial TTC5/STRAP also regulates p53/TP53-mediated apoptosis. This is Tetratricopeptide repeat protein 5 (TTC5) from Bos taurus (Bovine).